Here is a 551-residue protein sequence, read N- to C-terminus: Hydroxymethylpyrimidine/phosphomethylpyrimidine kinase THI21 (551 aa).

Glutamine 64 serves as a coordination point for 4-amino-5-hydroxymethyl-2-methylpyrimidine.

This sequence in the N-terminal section; belongs to the ThiD family. The protein in the C-terminal section; belongs to the thiaminase-2 family.

It catalyses the reaction 4-amino-5-hydroxymethyl-2-methylpyrimidine + ATP = 4-amino-2-methyl-5-(phosphooxymethyl)pyrimidine + ADP + H(+). The catalysed reaction is 4-amino-2-methyl-5-(phosphooxymethyl)pyrimidine + ATP = 4-amino-2-methyl-5-(diphosphooxymethyl)pyrimidine + ADP. It functions in the pathway cofactor biosynthesis; thiamine diphosphate biosynthesis; 4-amino-2-methyl-5-diphosphomethylpyrimidine from 5-amino-1-(5-phospho-D-ribosyl)imidazole: step 2/3. It participates in cofactor biosynthesis; thiamine diphosphate biosynthesis; 4-amino-2-methyl-5-diphosphomethylpyrimidine from 5-amino-1-(5-phospho-D-ribosyl)imidazole: step 3/3. Functionally, catalyzes the phosphorylation of hydroxymethylpyrimidine phosphate (HMP-P) to HMP-PP, and also probably that of HMP to HMP-P. This is Hydroxymethylpyrimidine/phosphomethylpyrimidine kinase THI21 (THI21) from Saccharomyces cerevisiae (strain ATCC 204508 / S288c) (Baker's yeast).